A 222-amino-acid chain; its full sequence is Potassium-transporting ATPase KdpC subunit (222 aa).

A helical transmembrane segment spans residues 13-35; sequence WAGLRSLLVLTVVTGVLYPLAVT. Positions 136-162 are disordered; sequence TADHKVKPSDVPADAVTSSGSGLDPDI.

This sequence belongs to the KdpC family. As to quaternary structure, the system is composed of three essential subunits: KdpA, KdpB and KdpC.

The protein resides in the cell membrane. In terms of biological role, part of the high-affinity ATP-driven potassium transport (or Kdp) system, which catalyzes the hydrolysis of ATP coupled with the electrogenic transport of potassium into the cytoplasm. This subunit acts as a catalytic chaperone that increases the ATP-binding affinity of the ATP-hydrolyzing subunit KdpB by the formation of a transient KdpB/KdpC/ATP ternary complex. This Streptomyces avermitilis (strain ATCC 31267 / DSM 46492 / JCM 5070 / NBRC 14893 / NCIMB 12804 / NRRL 8165 / MA-4680) protein is Potassium-transporting ATPase KdpC subunit.